A 395-amino-acid polypeptide reads, in one-letter code: Imidazolonepropionase (395 aa).

Fe(3+) is bound by residues H63 and H65. Residues H63 and H65 each coordinate Zn(2+). 3 residues coordinate 4-imidazolone-5-propanoate: R72, Y135, and H168. Y135 is a binding site for N-formimidoyl-L-glutamate. H233 contributes to the Fe(3+) binding site. Zn(2+) is bound at residue H233. Q236 provides a ligand contact to 4-imidazolone-5-propanoate. D308 contributes to the Fe(3+) binding site. A Zn(2+)-binding site is contributed by D308. N-formimidoyl-L-glutamate contacts are provided by N310 and G312. T313 lines the 4-imidazolone-5-propanoate pocket.

This sequence belongs to the metallo-dependent hydrolases superfamily. HutI family. Requires Zn(2+) as cofactor. The cofactor is Fe(3+).

Its subcellular location is the cytoplasm. The enzyme catalyses 4-imidazolone-5-propanoate + H2O = N-formimidoyl-L-glutamate. Its pathway is amino-acid degradation; L-histidine degradation into L-glutamate; N-formimidoyl-L-glutamate from L-histidine: step 3/3. Its function is as follows. Catalyzes the hydrolytic cleavage of the carbon-nitrogen bond in imidazolone-5-propanoate to yield N-formimidoyl-L-glutamate. It is the third step in the universal histidine degradation pathway. This chain is Imidazolonepropionase, found in Cereibacter sphaeroides (strain KD131 / KCTC 12085) (Rhodobacter sphaeroides).